Here is a 131-residue protein sequence, read N- to C-terminus: Small ribosomal subunit protein eS17A (131 aa).

It belongs to the eukaryotic ribosomal protein eS17 family. Component of the small ribosomal subunit (SSU). Mature yeast ribosomes consist of a small (40S) and a large (60S) subunit. The 40S small subunit contains 1 molecule of ribosomal RNA (18S rRNA) and at least 33 different proteins. The large 60S subunit contains 3 rRNA molecules (25S, 5.8S and 5S rRNA) and at least 46 different proteins.

It is found in the cytoplasm. In terms of biological role, component of the ribosome, a large ribonucleoprotein complex responsible for the synthesis of proteins in the cell. The small ribosomal subunit (SSU) binds messenger RNAs (mRNAs) and translates the encoded message by selecting cognate aminoacyl-transfer RNA (tRNA) molecules. The large subunit (LSU) contains the ribosomal catalytic site termed the peptidyl transferase center (PTC), which catalyzes the formation of peptide bonds, thereby polymerizing the amino acids delivered by tRNAs into a polypeptide chain. The nascent polypeptides leave the ribosome through a tunnel in the LSU and interact with protein factors that function in enzymatic processing, targeting, and the membrane insertion of nascent chains at the exit of the ribosomal tunnel. The chain is Small ribosomal subunit protein eS17A (rps1701) from Schizosaccharomyces pombe (strain 972 / ATCC 24843) (Fission yeast).